The primary structure comprises 414 residues: Serine hydroxymethyltransferase (414 aa).

Residues L116 and G120 to L122 contribute to the (6S)-5,6,7,8-tetrahydrofolate site. K224 is subject to N6-(pyridoxal phosphate)lysine. Residues E240 and S348 to F350 contribute to the (6S)-5,6,7,8-tetrahydrofolate site.

The protein belongs to the SHMT family. As to quaternary structure, homodimer. The cofactor is pyridoxal 5'-phosphate.

Its subcellular location is the cytoplasm. It carries out the reaction (6R)-5,10-methylene-5,6,7,8-tetrahydrofolate + glycine + H2O = (6S)-5,6,7,8-tetrahydrofolate + L-serine. It participates in one-carbon metabolism; tetrahydrofolate interconversion. The protein operates within amino-acid biosynthesis; glycine biosynthesis; glycine from L-serine: step 1/1. Its function is as follows. Catalyzes the reversible interconversion of serine and glycine with tetrahydrofolate (THF) serving as the one-carbon carrier. This reaction serves as the major source of one-carbon groups required for the biosynthesis of purines, thymidylate, methionine, and other important biomolecules. Also exhibits THF-independent aldolase activity toward beta-hydroxyamino acids, producing glycine and aldehydes, via a retro-aldol mechanism. In Campylobacter fetus subsp. fetus (strain 82-40), this protein is Serine hydroxymethyltransferase.